A 540-amino-acid polypeptide reads, in one-letter code: 2-isopropylmalate synthase (540 aa).

The Pyruvate carboxyltransferase domain maps to 8 to 269; it reads VLIFDTTLRD…YFNPFFGREP (262 aa). Aspartate 17, histidine 208, histidine 210, and asparagine 244 together coordinate Mn(2+). The segment at 408–540 is regulatory domain; sequence QLRLVQVSCG…AVLADLRSGI (133 aa).

Belongs to the alpha-IPM synthase/homocitrate synthase family. LeuA type 1 subfamily. In terms of assembly, homodimer. Requires Mn(2+) as cofactor.

It localises to the cytoplasm. The enzyme catalyses 3-methyl-2-oxobutanoate + acetyl-CoA + H2O = (2S)-2-isopropylmalate + CoA + H(+). It participates in amino-acid biosynthesis; L-leucine biosynthesis; L-leucine from 3-methyl-2-oxobutanoate: step 1/4. Its function is as follows. Catalyzes the condensation of the acetyl group of acetyl-CoA with 3-methyl-2-oxobutanoate (2-ketoisovalerate) to form 3-carboxy-3-hydroxy-4-methylpentanoate (2-isopropylmalate). This Prochlorococcus marinus (strain MIT 9313) protein is 2-isopropylmalate synthase.